Reading from the N-terminus, the 176-residue chain is Nascent polypeptide-associated complex subunit alpha (176 aa).

One can recognise an NAC-A/B domain in the interval 14–78 (SKNEKKAREL…AKVDDFTQRL (65 aa)). Positions 85–127 (LQQNEGVLPAGQDAVSKDPQSIQADMQAAADSATDKPSADDAV) are disordered. In terms of domain architecture, UBA spans 137–176 (LNADDIELVMQQAGVPRAKAAKALKEHDSDIVNAIMALSG).

The protein belongs to the NAC-alpha family. As to quaternary structure, part of the nascent polypeptide-associated complex (NAC), consisting of EGD2 and EGD1. NAC associates with ribosomes via EGD1.

It is found in the cytoplasm. It localises to the nucleus. Component of the nascent polypeptide-associated complex (NAC), a dynamic component of the ribosomal exit tunnel, protecting the emerging polypeptides from interaction with other cytoplasmic proteins to ensure appropriate nascent protein targeting. The NAC complex also promotes mitochondrial protein import by enhancing productive ribosome interactions with the outer mitochondrial membrane and blocks the inappropriate interaction of ribosomes translating non-secretory nascent polypeptides with translocation sites in the membrane of the endoplasmic reticulum. EGD2 may also be involved in transcription regulation. The protein is Nascent polypeptide-associated complex subunit alpha (EGD2) of Kluyveromyces lactis (strain ATCC 8585 / CBS 2359 / DSM 70799 / NBRC 1267 / NRRL Y-1140 / WM37) (Yeast).